We begin with the raw amino-acid sequence, 370 residues long: Lipoyl synthase 1, chloroplastic (370 aa).

Disordered stretches follow at residues 1-25 and 39-67; these read MMQS…PVCR and EAAP…KKPA. A chloroplast-targeting transit peptide spans 1 to 37; that stretch reads MMQSSLARPLPRPPIRPACGNPVCRSRPGSVSVARCR. Cys95, Cys100, Cys106, Cys132, Cys136, Cys139, and Ser347 together coordinate [4Fe-4S] cluster. Positions 115-336 constitute a Radical SAM core domain; sequence GEGDGIATAT…KEYGESVGFR (222 aa).

This sequence belongs to the radical SAM superfamily. Lipoyl synthase family. Requires [4Fe-4S] cluster as cofactor.

The protein resides in the plastid. It localises to the chloroplast. The catalysed reaction is [[Fe-S] cluster scaffold protein carrying a second [4Fe-4S](2+) cluster] + N(6)-octanoyl-L-lysyl-[protein] + 2 oxidized [2Fe-2S]-[ferredoxin] + 2 S-adenosyl-L-methionine + 4 H(+) = [[Fe-S] cluster scaffold protein] + N(6)-[(R)-dihydrolipoyl]-L-lysyl-[protein] + 4 Fe(3+) + 2 hydrogen sulfide + 2 5'-deoxyadenosine + 2 L-methionine + 2 reduced [2Fe-2S]-[ferredoxin]. It functions in the pathway protein modification; protein lipoylation via endogenous pathway; protein N(6)-(lipoyl)lysine from octanoyl-[acyl-carrier-protein]: step 2/2. Its function is as follows. Catalyzes the radical-mediated insertion of two sulfur atoms into the C-6 and C-8 positions of the octanoyl moiety bound to the lipoyl domains of lipoate-dependent enzymes, thereby converting the octanoylated domains into lipoylated derivatives. The chain is Lipoyl synthase 1, chloroplastic from Oryza sativa subsp. indica (Rice).